A 147-amino-acid polypeptide reads, in one-letter code: Ribosome-binding factor A (147 aa).

The tract at residues 126–147 (LKKNAQPAGDAHPYKDDDAMND) is disordered. The segment covering 137–147 (HPYKDDDAMND) has biased composition (basic and acidic residues).

Belongs to the RbfA family. In terms of assembly, monomer. Binds 30S ribosomal subunits, but not 50S ribosomal subunits or 70S ribosomes.

The protein resides in the cytoplasm. Functionally, one of several proteins that assist in the late maturation steps of the functional core of the 30S ribosomal subunit. Associates with free 30S ribosomal subunits (but not with 30S subunits that are part of 70S ribosomes or polysomes). Required for efficient processing of 16S rRNA. May interact with the 5'-terminal helix region of 16S rRNA. The polypeptide is Ribosome-binding factor A (Corynebacterium diphtheriae (strain ATCC 700971 / NCTC 13129 / Biotype gravis)).